The following is a 770-amino-acid chain: Amyloid-beta precursor protein (770 aa).

The first 17 residues, 1-17 (MLPGLALLLLAAWTARA), serve as a signal peptide directing secretion. Residues 18 to 701 (LEVPTDGNAG…AEDVGSNKGA (684 aa)) lie on the Extracellular side of the membrane. Residues 28–123 (LLAEPQIAMF…PYRCLVGEFV (96 aa)) form a GFLD subdomain region. One can recognise an E1 domain in the interval 28-189 (LLAEPQIAMF…RGVEFVCCPL (162 aa)). 6 cysteine pairs are disulfide-bonded: Cys38–Cys62, Cys73–Cys117, Cys98–Cys105, Cys133–Cys187, Cys144–Cys174, and Cys158–Cys186. 96 to 110 (NWCKRGRKQCKTHPH) contributes to the heparin binding site. A cuBD subdomain region spans residues 131–189 (DKCKFLHQERMDVCETHLHWHTVAKETCSEKSTNLHDYGMLLPCGIDKFRGVEFVCCPL). Cu(2+)-binding residues include His147, His151, and Tyr168. The tract at residues 181-188 (GVEFVCCP) is zinc-binding. The Zn(2+) site is built by Glu183, Cys186, and Cys187. The span at 194–207 (DNVDSADAEEDDSD) shows a compositional bias: acidic residues. The interval 194–284 (DNVDSADAEE…TTTTTTESVE (91 aa)) is disordered. Ser198 is subject to Phosphoserine; by CK2. Ser206 is modified (phosphoserine; by CK1). Sulfotyrosine is present on residues Tyr217 and Tyr262. Over residues 228–264 (VAEEEEVAEVEEEEADDDEDDEDGDEVEEEAEEPYEE) the composition is skewed to acidic residues. Over residues 268–281 (RTTSIATTTTTTTE) the composition is skewed to low complexity. Disulfide bonds link Cys291–Cys341, Cys300–Cys324, and Cys316–Cys337. The BPTI/Kunitz inhibitor domain maps to 291–341 (CSEQAETGPCRAMISRWYFDVTEGKCAPFFYGGCGGNRNNFDTEEYCMAVC). Residue Tyr336 is modified to Sulfotyrosine. Residues 344–365 (VMSQSLRKTTREPLTRDPVKLP) carry the OX-2 motif. The E2 domain maps to 374–565 (AVDKYLETPG…EEIQDEVDEL (192 aa)). The segment at 391–423 (FQKAKERLEAKHRERMSQVMREWEEAERQAKNL) is heparin-binding. The residue at position 441 (Ser441) is a Phosphoserine. The heparin-binding stretch occupies residues 491 to 522 (FNMLKKYVRAEQKDRQHTLKHFEHVRMVDPKK). Phosphotyrosine is present on Tyr497. Positions 523–540 (AAQIRSQVMTHLRVIYER) are collagen-binding. Asn542 and Asn571 each carry an N-linked (GlcNAc...) asparagine glycan. 4 residues coordinate Cu(2+): His677, Tyr681, His684, and His685. Positions 677, 681, 684, and 685 each coordinate Zn(2+). Residues 695 to 722 (VGSNKGAIIGLMVGGVVIATVIVITLVM) form an interaction with PSEN1 region. Residues 702 to 722 (IIGLMVGGVVIATVIVITLVM) form a helical membrane-spanning segment. Over 723–770 (LKKKQYTSIHHGVVEVDAAVTPEERHLSKMQQNGYENPTYKFFEQMQN) the chain is Cytoplasmic. The Basolateral sorting signal signature appears at 724-734 (KKKQYTSIHHG). A Phosphothreonine modification is found at Thr729. Ser730 bears the Phosphoserine; by APP-kinase I mark. The segment at 732–751 (HHGVVEVDAAVTPEERHLSK) is interaction with G(o)-alpha. Thr743 carries the post-translational modification Phosphothreonine; by CDK5 and MAPK10. The required for the interaction with KIF5B and for anterograde transport in axons stretch occupies residues 756–770 (GYENPTYKFFEQMQN). The residue at position 757 (Tyr757) is a Phosphotyrosine; by ABL1. The short motif at 757-762 (YENPTY) is the YENPXY motif; contains endocytosis signal element. A Glycyl lysine isopeptide (Lys-Gly) (interchain with G-Cter in ubiquitin) cross-link involves residue Lys763.

The protein belongs to the APP family. In terms of assembly, binds, via its C-terminus, to the PID domain of several cytoplasmic proteins, including APBB family members, the APBA family, MAPK8IP1, SHC1 and NUMB and DAB1. Binding to DAB1 inhibits its serine phosphorylation. Interacts (via NPXY motif) with DAB2 (via PID domain); the interaction is impaired by tyrosine phosphorylation of the NPXY motif. Also interacts with GPCR-like protein BPP, APPBP1, IB1, KNS2 (via its TPR domains), APPBP2 (via BaSS) and DDB1. In vitro, it binds MAPT via the MT-binding domains. Associates with microtubules in the presence of ATP and in a kinesin-dependent manner. Interacts, through a C-terminal domain, with GNAO1. Amyloid-beta protein 42 binds CHRNA7 in hippocampal neurons. Amyloid-beta associates with HADH2. Interacts with CPEB1, ANKS1B and AGER. Interacts with ITM2B. Interacts with ITM2C. Interacts with IDE. Can form homodimers; dimerization is enhanced in the presence of Cu(2+) ions. Can form homodimers; this is promoted by heparin binding. Amyloid-beta protein 40 interacts with S100A9. CTF-alpha product of APP interacts with GSAP. Isoform APP695 interacts with SORL1 (via N-terminal ectodomain); this interaction retains APP in the trans-Golgi network and reduces processing into soluble APP-alpha and amyloid-beta peptides. Isoform APP770 interacts with SORL1. The C99 fragment also interacts with SORL1. Interacts with PLD3. Interacts with VDAC1. Interacts with NSG1; could regulate APP processing. Amyloid-beta protein 42 interacts with FPR2. Interacts (via transmembrane region) with PSEN1; the interaction is direct. Interacts with LRRK2. Interacts (via cytoplasmic domain) with KIF5B. Interacts (via C-terminus) with APBB2/FE65L1 (via C-terminus). Interacts (via intracellular domain) with APBB3. Proteolytically processed under normal cellular conditions. Cleavage either by alpha-secretase, beta-secretase or theta-secretase leads to generation and extracellular release of soluble APP peptides, S-APP-alpha and S-APP-beta, and the retention of corresponding membrane-anchored C-terminal fragments, C80, C83 and C99. Subsequent processing of C80 and C83 by gamma-secretase yields P3 peptides. This is the major secretory pathway and is non-amyloidogenic. Alternatively, presenilin/nicastrin-mediated gamma-secretase processing of C99 releases the amyloid-beta proteins, amyloid-beta protein 40 and amyloid-beta protein 42, major components of amyloid plaques, and the cytotoxic C-terminal fragments, gamma-CTF(50), gamma-CTF(57) and gamma-CTF(59). PSEN1 cleavage is more efficient with C83 than with C99 as substrate (in vitro). Amyloid-beta protein 40 and Amyloid-beta protein 42 are cleaved by ACE. Many other minor amyloid-beta peptides, amyloid-beta 1-X peptides, are found in cerebral spinal fluid (CSF) including the amyloid-beta X-15 peptides, produced from the cleavage by alpha-secretase. In terms of processing, proteolytically cleaved by caspases during neuronal apoptosis. Cleavage at Asp-739 by either caspase-3, -8 or -9 results in the production of the neurotoxic C31 peptide and the increased production of amyloid-beta peptides. Post-translationally, N- and O-glycosylated. Phosphorylation in the C-terminal on tyrosine, threonine and serine residues is neuron-specific. Phosphorylation can affect APP processing, neuronal differentiation and interaction with other proteins. Phosphorylated on Thr-743 in neuronal cells by Cdc5 kinase and Mapk10, in dividing cells by Cdc2 kinase in a cell-cycle dependent manner with maximal levels at the G2/M phase and, in vitro, by GSK-3-beta. The Thr-743 phosphorylated form causes a conformational change which reduces binding of Fe65 family members. In dopaminergic (DA) neurons, phosphorylation on Thr-743 by LRKK2 promotes the production and the nuclear translocation of the APP intracellular domain (AICD) which induces DA neuron apoptosis. Phosphorylation on Tyr-757 is required for SHC binding. Phosphorylated in the extracellular domain by casein kinases on both soluble and membrane-bound APP. This phosphorylation is inhibited by heparin. In terms of processing, trophic-factor deprivation triggers the cleavage of surface APP by beta-secretase to release sAPP-beta which is further cleaved to release an N-terminal fragment of APP (N-APP). Post-translationally, amyloid-beta peptides are degraded by IDE. Sulfated on tyrosine residues.

Its subcellular location is the cell membrane. It localises to the membrane. The protein resides in the perikaryon. The protein localises to the cell projection. It is found in the growth cone. Its subcellular location is the clathrin-coated pit. It localises to the early endosome. The protein resides in the cytoplasmic vesicle. The protein localises to the endoplasmic reticulum. It is found in the golgi apparatus. Its subcellular location is the secreted. It localises to the cell surface. The protein resides in the nucleus. The protein localises to the cytoplasm. Its function is as follows. Functions as a cell surface receptor and performs physiological functions on the surface of neurons relevant to neurite growth, neuronal adhesion and axonogenesis. Interaction between APP molecules on neighboring cells promotes synaptogenesis. Involved in cell mobility and transcription regulation through protein-protein interactions. Can promote transcription activation through binding to APBB1-KAT5 and inhibit Notch signaling through interaction with Numb. Couples to apoptosis-inducing pathways such as those mediated by G(o) and JIP. Inhibits G(o)-alpha ATPase activity. Acts as a kinesin I membrane receptor, mediating the axonal transport of beta-secretase and presenilin 1. By acting as a kinesin I membrane receptor, plays a role in axonal anterograde transport of cargo towards synapses in axons. May be involved in copper homeostasis/oxidative stress through copper ion reduction. In vitro, copper-metallated APP induces neuronal death directly or is potentiated through Cu(2+)-mediated low-density lipoprotein oxidation. Can regulate neurite outgrowth through binding to components of the extracellular matrix such as heparin and collagen I and IV. Induces a AGER-dependent pathway that involves activation of p38 MAPK, resulting in internalization of amyloid-beta peptide and mitochondrial dysfunction in cultured cortical neurons. Provides Cu(2+) ions for GPC1 which are required for release of nitric oxide (NO) and subsequent degradation of the heparan sulfate chains on GPC1. Functionally, amyloid-beta peptides are lipophilic metal chelators with metal-reducing activity. Binds transient metals such as copper, zinc and iron. The gamma-CTF peptides as well as the caspase-cleaved peptides, including C31, are potent enhancers of neuronal apoptosis. This chain is Amyloid-beta precursor protein, found in Macaca fascicularis (Crab-eating macaque).